Reading from the N-terminus, the 92-residue chain is Small ribosomal subunit protein uS19 (92 aa).

It belongs to the universal ribosomal protein uS19 family.

Functionally, protein S19 forms a complex with S13 that binds strongly to the 16S ribosomal RNA. This Synechocystis sp. (strain ATCC 27184 / PCC 6803 / Kazusa) protein is Small ribosomal subunit protein uS19 (rpsS).